Consider the following 229-residue polypeptide: Ribonuclease 3 (229 aa).

In terms of domain architecture, RNase III spans 4–133; that stretch reads WEELQESVGF…FIGALYLDNG (130 aa). Mg(2+) is bound at residue glutamate 46. Residue aspartate 50 is part of the active site. Aspartate 119 and glutamate 122 together coordinate Mg(2+). The active site involves glutamate 122. Residues 159 to 228 form the DRBM domain; sequence DYKTQLQEIV…AQFAINKLIH (70 aa).

Belongs to the ribonuclease III family. In terms of assembly, homodimer. It depends on Mg(2+) as a cofactor.

The protein resides in the cytoplasm. The catalysed reaction is Endonucleolytic cleavage to 5'-phosphomonoester.. In terms of biological role, digests double-stranded RNA. Involved in the processing of primary rRNA transcript to yield the immediate precursors to the large and small rRNAs (23S and 16S). Processes some mRNAs, and tRNAs when they are encoded in the rRNA operon. Processes pre-crRNA and tracrRNA of type II CRISPR loci if present in the organism. This chain is Ribonuclease 3, found in Listeria monocytogenes serovar 1/2a (strain ATCC BAA-679 / EGD-e).